The following is a 211-amino-acid chain: 5-formyltetrahydrofolate cyclo-ligase (211 aa).

4–8 (KQLLR) contacts ATP. Substrate-binding positions include Glu56 and 152–156 (HGAGY). Residues 151 to 158 (GHGAGYYD) and Asp194 each bind ATP.

Belongs to the 5-formyltetrahydrofolate cyclo-ligase family. N-glycosylated.

The protein resides in the mitochondrion. It carries out the reaction (6S)-5-formyl-5,6,7,8-tetrahydrofolate + ATP = (6R)-5,10-methenyltetrahydrofolate + ADP + phosphate. Only enzyme known to utilize 5-formyltetrahydrofolate (folinic acid) as substrate. Contributes to tetrahydrofolate metabolism in an alternative way of folate biosynthesis. May regulate carbon flow through the folate-dependent one-carbon metabolic network that supplies carbon for the biosynthesis of purines, thymidine and amino acids. The protein is 5-formyltetrahydrofolate cyclo-ligase (FAU1) of Saccharomyces cerevisiae (strain ATCC 204508 / S288c) (Baker's yeast).